We begin with the raw amino-acid sequence, 917 residues long: MQGLAVSCQLPPAAAAARWRPRASSSNREAVLQCWKYELSQDHYLGGPLRIGQSQGSLHRHRSTNFLRPAAAAISVEQDEVNTYLPKGDMWSVHKFGGTCMGTPKRIQCVANIVLGDSSERKLIIVSAMSKVTDMMYNLVQKAQSRDDSYAIALAEVFEKHMTAAKDLLDGEDLARFLSQLHSDVSNLRAMLRAIYIAGHATESFSDFVVGHGELWSAQMLSYAIKKSGAPCSWMDTREVLVVTPSGCNQVDPDYLECEKRLQKWFSRQPAEIIVATGFIASTAGNIPTTLKRDGSDFSAAIVGSLVRARQVTIWTDVDGVFSADPRKVSEAVILSTLSYQEAWEMSYFGANVLHPRTIIPVMKDNIPIVIRNMFNLSAPGTMICKQPANENGDLDACVKSFATVDNLALVNVEGTGMAGVPGTASAIFSAVKDVGANVIMISQASSEHSVCFAVPEKEVAVVSAELHDRFREALAAGRLSKVEVINGCSILAAVGLRMASTPGVSAILFDALAKANINVRAIAQGCSEYNITVVLKQQDCVRALRAAHSRFFLSKTTLAVGIIGPGLIGGALLNQLKNQTAVLKENMNIDLRVIGITGSSTMLLSDTGIDLTQWKQLLQKEAEPADIGSFVHHLSDNHVFPNKVLVDCTADTSVASHYYDWLKKGIHVITPNKKANSGPLDQYLKLRTMQRASYTHYFYEATVGAGLPIISTLRGLLETGDKILRIEGIFSGTLSYIFNNFEGTRAFSDVVAEAREAGYTEPDPRDDLSGTDVARKVVVLARESGLRLELSDIPVKSLVPETLASCSSADEFMQKLPSFDEDWARQRSDAEAAGEVLRYVGALDAVNRSGQVELRRYRRDHPFAQLSGSDNIIAFTTSRYKEQPLIVRGPGAGAEVTAGGVFCDILRLASYLGAPS.

The transit peptide at 1-89 (MQGLAVSCQL…EVNTYLPKGD (89 aa)) directs the protein to the chloroplast. Positions 90-338 (MWSVHKFGGT…VSEAVILSTL (249 aa)) are aspartokinase. The segment at 339 to 563 (SYQEAWEMSY…LSKTTLAVGI (225 aa)) is interface. ACT domains lie at 413 to 488 (VEGT…VING) and 494 to 571 (AVGL…LIGG). The segment at 564-917 (IGPGLIGGAL…RLASYLGAPS (354 aa)) is homoserine dehydrogenase. Positions 569 and 650 each coordinate NAD(+). Positions 569, 650, and 674 each coordinate NADP(+). I569, T650, and K674 together coordinate NADPH. 4 residues coordinate Na(+): E701, V704, A706, and L708. Positions 759 and 762 each coordinate NADP(+). The L-homoserine site is built by E762 and D773. K777 (proton donor) is an active-site residue. Residue G894 coordinates NAD(+). Position 894 (G894) interacts with NADP(+). G894 provides a ligand contact to NADPH.

The protein in the N-terminal section; belongs to the aspartokinase family. This sequence in the C-terminal section; belongs to the homoserine dehydrogenase family. As to quaternary structure, homo- or heterodimer. A metal cation is required as a cofactor.

Its subcellular location is the plastid. The protein resides in the chloroplast. It catalyses the reaction L-homoserine + NADP(+) = L-aspartate 4-semialdehyde + NADPH + H(+). The catalysed reaction is L-homoserine + NAD(+) = L-aspartate 4-semialdehyde + NADH + H(+). It carries out the reaction L-aspartate + ATP = 4-phospho-L-aspartate + ADP. The protein operates within amino-acid biosynthesis; L-lysine biosynthesis via DAP pathway; (S)-tetrahydrodipicolinate from L-aspartate: step 1/4. Its pathway is amino-acid biosynthesis; L-methionine biosynthesis via de novo pathway; L-homoserine from L-aspartate: step 1/3. It participates in amino-acid biosynthesis; L-methionine biosynthesis via de novo pathway; L-homoserine from L-aspartate: step 3/3. It functions in the pathway amino-acid biosynthesis; L-threonine biosynthesis; L-threonine from L-aspartate: step 1/5. The protein operates within amino-acid biosynthesis; L-threonine biosynthesis; L-threonine from L-aspartate: step 3/5. In terms of biological role, bifunctional aspartate kinase and homoserine dehydrogenase that catalyzes the first and the third steps toward the synthesis of lysine, methionine and threonine from aspartate. The polypeptide is Bifunctional aspartokinase/homoserine dehydrogenase 2, chloroplastic (AKHSDH2) (Zea mays (Maize)).